Consider the following 101-residue polypeptide: Small ribosomal subunit protein uS14m (101 aa).

Belongs to the universal ribosomal protein uS14 family. In terms of assembly, component of the mitochondrial ribosome small subunit (28S) which comprises a 12S rRNA and about 30 distinct proteins. Interacts with LIAT1.

Its subcellular location is the mitochondrion. This is Small ribosomal subunit protein uS14m (mrps14) from Dictyostelium discoideum (Social amoeba).